The sequence spans 378 residues: Zinc transporter 7 (378 aa).

The Cytoplasmic segment spans residues methionine 1–asparagine 37. Residues leucine 38–tryptophan 58 form a helical membrane-spanning segment. Residues serine 59–aspartate 67 are Lumenal-facing. A helical transmembrane segment spans residues serine 68–serine 88. The Cytoplasmic portion of the chain corresponds to lysine 89–arginine 102. Residues alanine 103–phenylalanine 123 traverse the membrane as a helical segment. Residues serine 124 to arginine 140 lie on the Lumenal side of the membrane. The helical transmembrane segment at leucine 141–histidine 161 threads the bilayer. Residues histidine 161–histidine 220 form a his-rich loop region. Residues glycine 162–glycine 238 lie on the Cytoplasmic side of the membrane. The interval serine 186–threonine 228 is disordered. Positions histidine 204–serine 224 are enriched in basic and acidic residues. A helical membrane pass occupies residues valine 239–methionine 259. At methionine 260 to glycine 264 the chain is on the lumenal side. The helical transmembrane segment at leucine 265–isoleucine 285 threads the bilayer. Topologically, residues proline 286 to methionine 378 are cytoplasmic.

Belongs to the cation diffusion facilitator (CDF) transporter (TC 2.A.4) family. SLC30A subfamily. As to quaternary structure, homooligomer.

It is found in the golgi apparatus membrane. Its subcellular location is the cytoplasmic vesicle. It localises to the golgi apparatus. The protein resides in the trans-Golgi network. The protein localises to the sarcoplasmic reticulum. It is found in the mitochondrion. It catalyses the reaction Zn(2+)(in) = Zn(2+)(out). Its function is as follows. Zinc ion transporter mediating zinc entry from the cytosol into the lumen of organelles along the secretory pathway. By contributing to zinc ion homeostasis within the early secretory pathway, regulates the activation and folding of enzymes like alkaline phosphatases. This is Zinc transporter 7 from Rattus norvegicus (Rat).